Here is a 1021-residue protein sequence, read N- to C-terminus: MGKGGGRDKYEPAAISEHGNKKKAKKERDMDELKKEVSMDDHKLSLDELQRKYGTDLSRGLTTARAAEILARDGPNALTPPPTTPEWVKFCRQLFGGFSMLLWIGAILCFLAYGIQAATEEEPQNDNLYLGVVLSAVVIITGCFSYYQEAKSSKIMESFKNMVPQQALVVRNGEKMSINAEEVVVGDLVEVKGGDRIPADLRIISANGCKVDNSSLTGESEPQTRSPDFTNENPLETRNIAFFSTNCVEGTARGIVVYTGDRTVMGRIATLASGLEGGQTPIAAEIEHFIHIITGVAVFLGVTFFILSLILEYTWLEAVIFLIGIIVANVPEGLLATVTVCLTLTAKRMARKNCLVKNLEAVETLGSTSTICSDKTGTLTQNRMTVAHMWFDNQIHEADTTENQSGVSFDKTSATWLSLSRIAGLCNRAVFQANQENIPILKRAVAGDASESALLKCIELCCGSVKEMRDRYPKIVEIPFNSTNKYQLSIHKNPNTSEPQHLLVMKGAPERILDRCSSILLNGKEQPLDEELKDAFQNAYLELGGLGERVLGFCHLFLPDEQFPEGFQFDTDDVNFPLENLCFVGLISMIDPPRAAVPDAVGKCRSAGIKVIMVTGDHPITAKAIAKGVGIISEGNETVEDIAARLNIPVSQVNPRDAKACVVHGSDLKDMTPEQLDDILRHHTEIVFARTSPQQKLIIVEGCQRQGAIVAVTGDGVNDSPALKKADIGVAMGIAGSDVSKQAADMILLDDNFASIVTGVEEGRLIFDNLKKSIAYTLTSNIPEITPFLIFIIANIPLPLGTVTILCIDLGTDMVPAISLAYEQAESDIMKRQPRNPQTDKLVNERLISMAYGQIGMIQALGGFFTYFVILAENGFLPIHLLGLRVDWDDRWVNDVEDSYGQQWTYEQRKIVEFTCHTAFFVSIVVVQWADLVICKTRRNSVFQQGMKNKILIFGLFEETALAAFLSYCPGMGVALRMYPLKPTWWFCAFPYSLLIFVYDEVRKLIIRRRPGGWVEKETYY.

The propeptide occupies 1–5 (MGKGG). Basic and acidic residues predominate over residues 1–11 (MGKGGGRDKYE). The segment at 1–37 (MGKGGGRDKYEPAAISEHGNKKKAKKERDMDELKKEV) is disordered. The Cytoplasmic portion of the chain corresponds to 6 to 85 (GRDKYEPAAI…NALTPPPTTP (80 aa)). An N6-acetyllysine modification is found at Lys9. At Tyr10 the chain carries Phosphotyrosine. Ser16 carries the post-translational modification Phosphoserine; by PKC. An N6-acetyllysine modification is found at Lys21. The segment covering 26-37 (KERDMDELKKEV) has biased composition (basic and acidic residues). Phosphoserine is present on residues Ser38 and Ser45. The interval 80–82 (PPP) is phosphoinositide-3 kinase binding. Residues 86–106 (EWVKFCRQLFGGFSMLLWIGA) form a helical membrane-spanning segment. The Extracellular segment spans residues 107–129 (ILCFLAYGIQAATEEEPQNDNLY). A helical membrane pass occupies residues 130 to 150 (LGVVLSAVVIITGCFSYYQEA). Residues 151–286 (KSSKIMESFK…GGQTPIAAEI (136 aa)) lie on the Cytoplasmic side of the membrane. Residues 214 to 233 (SSLTGESEPQTRSPDFTNEN) are disordered. Ser226 bears the Phosphoserine mark. Residue Tyr258 is modified to Phosphotyrosine. A helical transmembrane segment spans residues 287 to 306 (EHFIHIITGVAVFLGVTFFI). Residues 307-318 (LSLILEYTWLEA) lie on the Extracellular side of the membrane. Residues 319-336 (VIFLIGIIVANVPEGLLA) form a helical membrane-spanning segment. Over 337 to 770 (TVTVCLTLTA…EEGRLIFDNL (434 aa)) the chain is Cytoplasmic. The active-site 4-aspartylphosphate intermediate is the Asp374. Residues Ser450 and Ser482 each carry the phosphoserine modification. Position 485 (Lys485) interacts with ATP. Phosphotyrosine is present on Tyr540. Residues 594–715 (RAAVPDAVGK…QGAIVAVTGD (122 aa)) form a mediates interaction with SCN7A region. Lys659 carries the post-translational modification N6-succinyllysine. Residue Ser666 is modified to Phosphoserine. Mg(2+) is bound by residues Asp715 and Asp719. The helical transmembrane segment at 771-790 (KKSIAYTLTSNIPEITPFLI) threads the bilayer. Over 791-800 (FIIANIPLPL) the chain is Extracellular. Residues 801–821 (GTVTILCIDLGTDMVPAISLA) form a helical membrane-spanning segment. Residues 822 to 841 (YEQAESDIMKRQPRNPQTDK) lie on the Cytoplasmic side of the membrane. Residues 842–864 (LVNERLISMAYGQIGMIQALGGF) traverse the membrane as a helical segment. The Extracellular portion of the chain corresponds to 865 to 916 (FTYFVILAENGFLPIHLLGLRVDWDDRWVNDVEDSYGQQWTYEQRKIVEFTC). Residues 917–936 (HTAFFVSIVVVQWADLVICK) traverse the membrane as a helical segment. Topologically, residues 937–949 (TRRNSVFQQGMKN) are cytoplasmic. Ser941 carries the phosphoserine; by PKA modification. The helical transmembrane segment at 950–968 (KILIFGLFEETALAAFLSY) threads the bilayer. Residues 969 to 983 (CPGMGVALRMYPLKP) are Extracellular-facing. The chain crosses the membrane as a helical span at residues 984–1004 (TWWFCAFPYSLLIFVYDEVRK). Residues 1005–1021 (LIIRRRPGGWVEKETYY) are Cytoplasmic-facing.

The protein belongs to the cation transport ATPase (P-type) (TC 3.A.3) family. Type IIC subfamily. As to quaternary structure, the sodium/potassium-transporting ATPase is composed of a catalytic alpha subunit, an auxiliary non-catalytic beta subunit and an additional regulatory subunit. Interacts with regulatory subunit FXYD1. Interacts with regulatory subunit FXYD3. Interacts with SIK1. Interacts with SLC35G1 and STIM1. Interacts with CLN3; this interaction regulates the sodium/potassium-transporting ATPase complex localization at the plasma membrane. Interacts with SCN7A; activates ATP1A1 P-type sodium:potassium-exchanging transporter activity which indirectly signals to nearby neurons to regulate sodium homeostasis. Post-translationally, phosphorylation on Tyr-10 modulates pumping activity. Phosphorylation of Ser-941 by PKA modulates the response of ATP1A1 to PKC. Dephosphorylation by protein phosphatase 2A (PP2A) following increases in intracellular sodium, leading to increase catalytic activity.

Its subcellular location is the cell membrane. It localises to the basolateral cell membrane. It is found in the sarcolemma. The protein localises to the cell projection. The protein resides in the axon. Its subcellular location is the melanosome. The enzyme catalyses K(+)(out) + Na(+)(in) + ATP + H2O = K(+)(in) + Na(+)(out) + ADP + phosphate + H(+). Its function is as follows. This is the catalytic component of the active enzyme, which catalyzes the hydrolysis of ATP coupled with the exchange of sodium and potassium ions across the plasma membrane. This action creates the electrochemical gradient of sodium and potassium ions, providing the energy for active transport of various nutrients. Could also be part of an osmosensory signaling pathway that senses body-fluid sodium levels and controls salt intake behavior as well as voluntary water intake to regulate sodium homeostasis. The polypeptide is Sodium/potassium-transporting ATPase subunit alpha-1 (ATP1A1) (Equus caballus (Horse)).